The sequence spans 393 residues: Transcription factor bHLH112 (393 aa).

Disordered regions lie at residues 248–277 and 332–356; these read TRAQ…SPLP and KQGA…NENH. The segment covering 254 to 265 has biased composition (basic and acidic residues); the sequence is SLKRAKDNESAA. A bHLH domain is found at 270–319; that stretch reads VTTPSPLPTFKVRKENLRDQITSLQQLVSPFGKTDTASVLQEAIEYIKFL. Low complexity predominate over residues 332–347; that stretch reads KQGASNQQQQQISGKS.

In terms of assembly, homodimer.

It is found in the nucleus. The protein is Transcription factor bHLH112 (BHLH112) of Arabidopsis thaliana (Mouse-ear cress).